A 944-amino-acid polypeptide reads, in one-letter code: TBC1 domain family member 31 (944 aa).

5 WD repeats span residues 12–52 (ELVS…LDTF), 53–95 (QRKR…CDTL), 96–143 (FCKY…ARQL), 144–191 (FRII…IQTC), and 192–229 (KLLF…NIYS). The segment at 262–281 (KRKVTSGRVQQPAKSRESKI) is disordered. Residues 300-476 (ELPDGLNKER…KLFDNIFSNH (177 aa)) enclose the Rab-GAP TBC domain. Coiled coils occupy residues 605-735 (QKQE…QKVD) and 791-825 (NKCY…KWKE). Residues 865–875 (PCHKEEPRFQN) show a composition bias toward basic and acidic residues. The interval 865–900 (PCHKEEPRFQNEQEDSSCLPRTSQLNDSSEMDPSTQ) is disordered. Polar residues predominate over residues 883–900 (LPRTSQLNDSSEMDPSTQ). Residues 931-934 (QARH) form a mediates direct interaction with PJA2 region.

Interacts with PJA2; the interaction is direct and recruits PJA2 to centrosomes. Interacts with OFD1; regulates its activity in cilium assembly. Interacts with PRKACA.

It localises to the cytoplasm. Its subcellular location is the cytoskeleton. The protein resides in the microtubule organizing center. The protein localises to the centrosome. It is found in the centriolar satellite. It localises to the cilium basal body. Molecular adapter which is involved in cilium biogenesis. Part of a functional complex including OFD1 a centriolar protein involved in cilium assembly. Could regulate the cAMP-dependent phosphorylation of OFD1, and its subsequent ubiquitination by PJA2 which ultimately leads to its proteasomal degradation. This is TBC1 domain family member 31 from Pongo abelii (Sumatran orangutan).